Reading from the N-terminus, the 297-residue chain is D-alanine--D-alanine ligase (297 aa).

Residues 103 to 293 form the ATP-grasp domain; sequence KEILMHHRMP…FDSFVKSILE (191 aa). 129–180 is an ATP binding site; sequence ISFPVAVKPSSGGSSIATFKVKSLEELENAYQQASKHGEVMIEQWVTGKEIT. Residues Asp-247, Glu-260, and Asn-262 each coordinate Mg(2+).

It belongs to the D-alanine--D-alanine ligase family. Mg(2+) serves as cofactor. It depends on Mn(2+) as a cofactor.

The protein localises to the cytoplasm. The enzyme catalyses 2 D-alanine + ATP = D-alanyl-D-alanine + ADP + phosphate + H(+). Its pathway is cell wall biogenesis; peptidoglycan biosynthesis. Functionally, cell wall formation. This Francisella philomiragia subsp. philomiragia (strain ATCC 25017 / CCUG 19701 / FSC 153 / O#319-036) protein is D-alanine--D-alanine ligase.